Reading from the N-terminus, the 235-residue chain is Purine nucleoside phosphorylase DeoD-type (235 aa).

H4 is an a purine D-ribonucleoside binding site. Phosphate-binding positions include G20, R24, R43, and 87–90 (RVGT). A purine D-ribonucleoside is bound by residues 179-181 (EME) and 203-204 (SD). Residue D204 is the Proton donor of the active site.

This sequence belongs to the PNP/UDP phosphorylase family. In terms of assembly, homohexamer; trimer of homodimers.

It carries out the reaction a purine D-ribonucleoside + phosphate = a purine nucleobase + alpha-D-ribose 1-phosphate. The enzyme catalyses a purine 2'-deoxy-D-ribonucleoside + phosphate = a purine nucleobase + 2-deoxy-alpha-D-ribose 1-phosphate. Functionally, catalyzes the reversible phosphorolytic breakdown of the N-glycosidic bond in the beta-(deoxy)ribonucleoside molecules, with the formation of the corresponding free purine bases and pentose-1-phosphate. The chain is Purine nucleoside phosphorylase DeoD-type from Clostridium perfringens (strain ATCC 13124 / DSM 756 / JCM 1290 / NCIMB 6125 / NCTC 8237 / Type A).